The chain runs to 342 residues: Phosphate acyltransferase (342 aa).

It belongs to the PlsX family. In terms of assembly, homodimer. Probably interacts with PlsY.

The protein resides in the cytoplasm. The enzyme catalyses a fatty acyl-[ACP] + phosphate = an acyl phosphate + holo-[ACP]. Its pathway is lipid metabolism; phospholipid metabolism. In terms of biological role, catalyzes the reversible formation of acyl-phosphate (acyl-PO(4)) from acyl-[acyl-carrier-protein] (acyl-ACP). This enzyme utilizes acyl-ACP as fatty acyl donor, but not acyl-CoA. The polypeptide is Phosphate acyltransferase (Legionella pneumophila (strain Corby)).